The primary structure comprises 273 residues: Cbp/p300-interacting transactivator 2 (273 aa).

The disordered stretch occupies residues 137 to 204 (DLHPAAGHQM…GSGGSGSSNM (68 aa)). Positions 165-200 (STPGGSGGSSTPGGSGGSAGGGAGSSNSGGGSGGSG) are enriched in gly residues.

This sequence belongs to the CITED family. Interacts (via C-terminus) with SMAD2. Interacts (via C-terminus) with SMAD3 (via MH2 domain). Interacts with LHX2 (via LIM domains). Interacts with WT1. Interacts (via C-terminus) with EP300 (via CH1 domain); the interaction is stimulated in response to hypoxia. Interacts with PPARA. Interacts (via C-terminus) with TFAP2A, TFAP2B and TFAP2C.

It localises to the nucleus. Its function is as follows. Transcriptional coactivator of the p300/CBP-mediated transcription complex. Acts as a bridge, linking TFAP2 transcription factors and the p300/CBP transcriptional coactivator complex in order to stimulate TFAP2-mediated transcriptional activation. Positively regulates TGF-beta signaling through its association with the SMAD/p300/CBP-mediated transcriptional coactivator complex. Stimulates the peroxisome proliferator-activated receptors PPARA transcriptional activity. Enhances estrogen-dependent transactivation mediated by estrogen receptors. Also acts as a transcriptional corepressor; interferes with the binding of the transcription factors HIF1A or STAT2 and the p300/CBP transcriptional coactivator complex. Participates in sex determination and early gonad development by stimulating transcription activation of SRY. Plays a role in controlling left-right patterning during embryogenesis; potentiates transcriptional activation of NODAL-mediated gene transcription in the left lateral plate mesoderm (LPM). Plays an essential role in differentiation of the adrenal cortex from the adrenogonadal primordium (AGP); stimulates WT1-mediated transcription activation thereby up-regulating the nuclear hormone receptor NR5A1 promoter activity. Associates with chromatin to the PITX2 P1 promoter region. This Saguinus labiatus (Red-chested mustached tamarin) protein is Cbp/p300-interacting transactivator 2 (CITED2).